A 39-amino-acid chain; its full sequence is Photosystem II reaction center protein L (39 aa).

Residues 18–38 (SLYLGLLLIAVLGILFSSYFF) traverse the membrane as a helical segment.

Belongs to the PsbL family. As to quaternary structure, PSII is composed of 1 copy each of membrane proteins PsbA, PsbB, PsbC, PsbD, PsbE, PsbF, PsbH, PsbI, PsbJ, PsbK, PsbL, PsbM, PsbT, PsbX, PsbY, PsbZ, Psb30/Ycf12, peripheral proteins PsbO, CyanoQ (PsbQ), PsbU, PsbV and a large number of cofactors. It forms dimeric complexes.

The protein resides in the cellular thylakoid membrane. Its function is as follows. One of the components of the core complex of photosystem II (PSII). PSII is a light-driven water:plastoquinone oxidoreductase that uses light energy to abstract electrons from H(2)O, generating O(2) and a proton gradient subsequently used for ATP formation. It consists of a core antenna complex that captures photons, and an electron transfer chain that converts photonic excitation into a charge separation. This subunit is found at the monomer-monomer interface and is required for correct PSII assembly and/or dimerization. This Crocosphaera subtropica (strain ATCC 51142 / BH68) (Cyanothece sp. (strain ATCC 51142)) protein is Photosystem II reaction center protein L.